The chain runs to 423 residues: Tyrosine--tRNA ligase (423 aa).

An L-tyrosine-binding site is contributed by tyrosine 35. The 'HIGH' region signature appears at 40–49 (PTAASLHVGH). Residues tyrosine 170 and glutamine 174 each contribute to the L-tyrosine site. The 'KMSKS' region signature appears at 231–235 (KFGKS). Residue lysine 234 participates in ATP binding. One can recognise an S4 RNA-binding domain in the interval 353–419 (GPLVDLLVEV…GKKNLAAVEV (67 aa)).

The protein belongs to the class-I aminoacyl-tRNA synthetase family. TyrS type 1 subfamily. In terms of assembly, homodimer.

The protein resides in the cytoplasm. The enzyme catalyses tRNA(Tyr) + L-tyrosine + ATP = L-tyrosyl-tRNA(Tyr) + AMP + diphosphate + H(+). Its function is as follows. Catalyzes the attachment of tyrosine to tRNA(Tyr) in a two-step reaction: tyrosine is first activated by ATP to form Tyr-AMP and then transferred to the acceptor end of tRNA(Tyr). The polypeptide is Tyrosine--tRNA ligase (Streptomyces griseus subsp. griseus (strain JCM 4626 / CBS 651.72 / NBRC 13350 / KCC S-0626 / ISP 5235)).